A 158-amino-acid polypeptide reads, in one-letter code: NAD(P)H-quinone oxidoreductase subunit J, chloroplastic (158 aa).

Belongs to the complex I 30 kDa subunit family. NDH is composed of at least 16 different subunits, 5 of which are encoded in the nucleus.

It localises to the plastid. The protein resides in the chloroplast thylakoid membrane. It carries out the reaction a plastoquinone + NADH + (n+1) H(+)(in) = a plastoquinol + NAD(+) + n H(+)(out). The enzyme catalyses a plastoquinone + NADPH + (n+1) H(+)(in) = a plastoquinol + NADP(+) + n H(+)(out). NDH shuttles electrons from NAD(P)H:plastoquinone, via FMN and iron-sulfur (Fe-S) centers, to quinones in the photosynthetic chain and possibly in a chloroplast respiratory chain. The immediate electron acceptor for the enzyme in this species is believed to be plastoquinone. Couples the redox reaction to proton translocation, and thus conserves the redox energy in a proton gradient. The protein is NAD(P)H-quinone oxidoreductase subunit J, chloroplastic of Acorus calamus var. americanus (American sweet flag).